A 116-amino-acid chain; its full sequence is Ribosome-binding factor A (116 aa).

This sequence belongs to the RbfA family. As to quaternary structure, monomer. Binds 30S ribosomal subunits, but not 50S ribosomal subunits or 70S ribosomes.

The protein localises to the cytoplasm. In terms of biological role, one of several proteins that assist in the late maturation steps of the functional core of the 30S ribosomal subunit. Associates with free 30S ribosomal subunits (but not with 30S subunits that are part of 70S ribosomes or polysomes). Required for efficient processing of 16S rRNA. May interact with the 5'-terminal helix region of 16S rRNA. This Streptococcus pyogenes serotype M5 (strain Manfredo) protein is Ribosome-binding factor A.